Consider the following 394-residue polypeptide: Elongation factor Tu (394 aa).

In terms of domain architecture, tr-type G spans 10–204; sequence KPHINVGTIG…FLDSYIPEPK (195 aa). A G1 region spans residues 19 to 26; the sequence is GHVDHGKT. Position 19-26 (19-26) interacts with GTP; that stretch reads GHVDHGKT. A Mg(2+)-binding site is contributed by Thr26. The interval 60 to 64 is G2; the sequence is GITIN. Residues 81–84 are G3; sequence DCPG. GTP contacts are provided by residues 81 to 85 and 136 to 139; these read DCPGH and NKCD. The tract at residues 136–139 is G4; it reads NKCD. A G5 region spans residues 174 to 176; the sequence is SAL.

It belongs to the TRAFAC class translation factor GTPase superfamily. Classic translation factor GTPase family. EF-Tu/EF-1A subfamily. Monomer.

It localises to the cytoplasm. It catalyses the reaction GTP + H2O = GDP + phosphate + H(+). Its function is as follows. GTP hydrolase that promotes the GTP-dependent binding of aminoacyl-tRNA to the A-site of ribosomes during protein biosynthesis. The sequence is that of Elongation factor Tu from Buchnera aphidicola subsp. Acyrthosiphon pisum (strain 5A).